The following is a 184-amino-acid chain: UPF0316 protein BPUM_0594 (184 aa).

A run of 3 helical transmembrane segments spans residues 9-29, 41-61, and 67-87; these read AFTM…FSTM, AAAF…SIVL, and IQNV…GMKI.

Belongs to the UPF0316 family.

It localises to the cell membrane. In Bacillus pumilus (strain SAFR-032), this protein is UPF0316 protein BPUM_0594.